The chain runs to 352 residues: MLLLGIESSCDETGVALVETHGSALPQLRSHALHSQIAMHQAYGGVVPELASRDHIRRVLPLTEAVMAEAGRSLAEIDVVAYTRGPGLAGALLVGAGVACALGAALGKPVLGVHHLEGHLLSPFLSADPPEFPFVALLVSGGHTQLMRVDGVGRYELLGETIDDAAGEAFDKSAKLMGLPYPGGPWLAKLAEAGNPAAFKLPRPLLHSGDLDFSFAGLKTAVLTQAKKLGAELEANKADLAASTQAAIVEVLLKKSLAALGQTGLKRLVVAGGVGANRSLREQLNAACAKRGVRVHYPELHLCTDNGAMIAMAAAMRLQSGLAEASERYAFDVKPRWPMASLMASSAAPVAA.

The Fe cation site is built by His115 and His119. Substrate contacts are provided by residues 138–142 (LVSGG), Asp171, Gly184, and Asn277. Asp305 contributes to the Fe cation binding site.

The protein belongs to the KAE1 / TsaD family. Fe(2+) serves as cofactor.

It is found in the cytoplasm. It catalyses the reaction L-threonylcarbamoyladenylate + adenosine(37) in tRNA = N(6)-L-threonylcarbamoyladenosine(37) in tRNA + AMP + H(+). In terms of biological role, required for the formation of a threonylcarbamoyl group on adenosine at position 37 (t(6)A37) in tRNAs that read codons beginning with adenine. Is involved in the transfer of the threonylcarbamoyl moiety of threonylcarbamoyl-AMP (TC-AMP) to the N6 group of A37, together with TsaE and TsaB. TsaD likely plays a direct catalytic role in this reaction. This chain is tRNA N6-adenosine threonylcarbamoyltransferase, found in Variovorax paradoxus (strain S110).